A 556-amino-acid chain; its full sequence is Testis-specific protein 10-interacting protein (556 aa).

Polar residues predominate over residues 1–20 (MGQETNMLNAHQQLVRTSSG). 2 disordered regions span residues 1–102 (MGQE…SPRK) and 180–320 (CTSI…GPWD). Over residues 75-85 (KDRRLRGRNKK) the composition is skewed to basic residues. Composition is skewed to acidic residues over residues 213 to 225 (EPEE…LGAE) and 246 to 260 (LEEE…EAED). Positions 266–278 (PWRRRTSSRRKGR) are enriched in basic residues. Residues 304–320 (EPQRRKPRAKELEGPWD) are compositionally biased toward basic and acidic residues. Residues 387-463 (LRAWELQQRE…ELQGIQHRVQ (77 aa)) adopt a coiled-coil conformation. The tract at residues 503-556 (AGKRDMEGAPRRHRSHRSVGARMEPSSQSPPKMEPTGSQADQHFAPNPDQELSP) is disordered. A compositionally biased stretch (polar residues) spans 527 to 543 (PSSQSPPKMEPTGSQAD).

This chain is Testis-specific protein 10-interacting protein (TSGA10IP), found in Bos taurus (Bovine).